Consider the following 192-residue polypeptide: Molybdenum cofactor cytidylyltransferase (192 aa).

D101 serves as a coordination point for Mg(2+).

In terms of assembly, monomer. Interacts with the Moco-binding chaperone PaoD. Mg(2+) is required as a cofactor. It depends on Mn(2+) as a cofactor.

The enzyme catalyses Mo-molybdopterin + CTP + H(+) = Mo-molybdopterin cytosine dinucleotide + diphosphate. Transfers a CMP moiety from CTP to Mo-molybdopterin (Mo-MPT) cofactor (Moco or molybdenum cofactor) to form Mo-molybdopterin cytosine dinucleotide (Mo-MCD) cofactor. Is specific for CTP; other nucleotides such as ATP and GTP cannot be utilized. Is also able to convert MPT to MCD in the absence of molybdate, however, with only one catalytic turnover. The chain is Molybdenum cofactor cytidylyltransferase (mocA) from Escherichia coli (strain K12).